The following is a 99-amino-acid chain: Gibberellin-regulated protein 2 (99 aa).

The signal sequence occupies residues 1–26 (MAVFRSTLVLLLIIVCLTTYELHVHA).

This sequence belongs to the GASA family. In terms of processing, six disulfide bonds may be present. Dry seeds and maturating siliques.

The protein localises to the secreted. In terms of biological role, gibberellin-regulated protein that may function in hormonal controlled steps of development such as seed germination, flowering and seed maturation. This is Gibberellin-regulated protein 2 (GASA2) from Arabidopsis thaliana (Mouse-ear cress).